The primary structure comprises 292 residues: Acetylglutamate kinase (292 aa).

Residues 62–63 (GG), arginine 84, and asparagine 188 each bind substrate.

It belongs to the acetylglutamate kinase family. ArgB subfamily.

It localises to the cytoplasm. It carries out the reaction N-acetyl-L-glutamate + ATP = N-acetyl-L-glutamyl 5-phosphate + ADP. It participates in amino-acid biosynthesis; L-arginine biosynthesis; N(2)-acetyl-L-ornithine from L-glutamate: step 2/4. Catalyzes the ATP-dependent phosphorylation of N-acetyl-L-glutamate. The chain is Acetylglutamate kinase from Methanosarcina mazei (strain ATCC BAA-159 / DSM 3647 / Goe1 / Go1 / JCM 11833 / OCM 88) (Methanosarcina frisia).